We begin with the raw amino-acid sequence, 104 residues long: Zinc finger C2H2 protein ECU02_0310 (104 aa).

The C2H2-type zinc finger occupies 56–80 (FYCCECDRHFITEKVLMEHKRSNPH).

This sequence belongs to the ZNF593/BUD20 C2H2-type zinc-finger protein family. In terms of assembly, associates with pre-60S ribosomal particles; released from the pre-60S particle very early in the cytoplasm.

The protein localises to the nucleus. It localises to the cytoplasm. Involved in pre-60S ribosomal particles maturation by promoting the nuclear export of the 60S ribosome. The chain is Zinc finger C2H2 protein ECU02_0310 from Encephalitozoon cuniculi (strain GB-M1) (Microsporidian parasite).